A 600-amino-acid polypeptide reads, in one-letter code: Chaperone protein DnaK (600 aa).

Thr-175 carries the phosphothreonine; by autocatalysis modification. Low complexity predominate over residues 569 to 578; that stretch reads SFAQATAQQA. The disordered stretch occupies residues 569–600; the sequence is SFAQATAQQANTSESDPKADDSNTIDAEIKQD. The segment covering 583–600 has biased composition (basic and acidic residues); that stretch reads SDPKADDSNTIDAEIKQD.

Belongs to the heat shock protein 70 family.

Functionally, acts as a chaperone. The polypeptide is Chaperone protein DnaK (Mesomycoplasma hyopneumoniae (strain 7448) (Mycoplasma hyopneumoniae)).